The sequence spans 198 residues: Type II secretion system protein J (198 aa).

Positions 1–7 (MIRRSSG) are cleaved as a propeptide — leader sequence. F8 bears the N-methylphenylalanine mark. The chain crosses the membrane as a helical span at residues 8-28 (FTLVEMLLALAILAALSVAAV).

Belongs to the GSP J family. As to quaternary structure, type II secretion is composed of four main components: the outer membrane complex, the inner membrane complex, the cytoplasmic secretion ATPase and the periplasm-spanning pseudopilus. Interacts with core component PulG. Cleaved by prepilin peptidase. Post-translationally, methylated by prepilin peptidase at the amino group of the N-terminal phenylalanine once the leader sequence is cleaved by prepilin peptidase.

The protein localises to the cell inner membrane. Functionally, component of the type II secretion system required for the energy-dependent secretion of extracellular factors such as proteases and toxins from the periplasm. Part of the pseudopilus tip complex that is critical for the recognition and binding of secretion substrates. The chain is Type II secretion system protein J (pulJ) from Klebsiella pneumoniae.